We begin with the raw amino-acid sequence, 388 residues long: Probable acetyl-CoA acetyltransferase (388 aa).

The Acyl-thioester intermediate role is filled by cysteine 84. Lysine 187 is covalently cross-linked (Isoglutamyl lysine isopeptide (Lys-Gln) (interchain with Q-Cter in protein Pup)). Residues histidine 345 and cysteine 375 each act as proton acceptor in the active site.

The protein belongs to the thiolase-like superfamily. Thiolase family.

The enzyme catalyses 2 acetyl-CoA = acetoacetyl-CoA + CoA. The sequence is that of Probable acetyl-CoA acetyltransferase from Mycolicibacterium smegmatis (strain ATCC 700084 / mc(2)155) (Mycobacterium smegmatis).